A 130-amino-acid polypeptide reads, in one-letter code: Protein ApaG (130 aa).

Residues 3–127 (RAVTRRIEVT…FSLDSPEGKR (125 aa)) enclose the ApaG domain.

The sequence is that of Protein ApaG from Rhodopseudomonas palustris (strain ATCC BAA-98 / CGA009).